Reading from the N-terminus, the 79-residue chain is uncharacterized protein (79 aa).

Residues 1–19 (MKYVALAFVLSLVILQISA) form the signal peptide.

As to expression, nacreous layer of shell (at protein level). Expressed primarily in the mantle with highest level in the mantle pallium and lower level in the mantle edge.

Its subcellular location is the secreted. This is an uncharacterized protein from Pinctada maxima (Silver-lipped pearl oyster).